A 184-amino-acid chain; its full sequence is MNIIAGFQNNFSEGLYTKFKSYRYRVFVEYLGWELNCPNNEETRIQFDKVDTAYVVAQDRESNIIGCARLLPTTQPYLLGEIFPQLLNGMPIPCSPEIWELSRFSAVDFSKPPSSSSQAVSSPISIAILQEAINFAREQGAKQLITTSPLGVERLLRAAGFRAHRAGPPMMIDGYSMFACLIDV.

This sequence belongs to the autoinducer synthase family.

The catalysed reaction is a fatty acyl-[ACP] + S-adenosyl-L-methionine = an N-acyl-L-homoserine lactone + S-methyl-5'-thioadenosine + holo-[ACP] + H(+). In terms of biological role, involved in the synthesis of the acyl-homoserine lactone (AHL) signal N-(3-hydroxydodecanoyl)-L-HSL (3-hydroxy-C(12)-HSL or OH-dDHL). Required for normal biofilm development. This is Acyl-homoserine-lactone synthase from Acinetobacter baumannii.